A 108-amino-acid chain; its full sequence is MSKDTASQPSLTKLIGLDIFGVGRLHAILLICIFLSAIGVVLATHNTRQMTVQRENLLLEKDILDGEWRNLILEESALAEHSRVQARSVRELDMERPAPDKEVIIKLR.

At 1–24 (MSKDTASQPSLTKLIGLDIFGVGR) the chain is on the cytoplasmic side. The chain crosses the membrane as a helical span at residues 25–45 (LHAILLICIFLSAIGVVLATH). The Periplasmic portion of the chain corresponds to 46 to 108 (NTRQMTVQRE…PDKEVIIKLR (63 aa)).

Belongs to the FtsL family. As to quaternary structure, part of a complex composed of FtsB, FtsL and FtsQ.

It localises to the cell inner membrane. Essential cell division protein. May link together the upstream cell division proteins, which are predominantly cytoplasmic, with the downstream cell division proteins, which are predominantly periplasmic. The sequence is that of Cell division protein FtsL from Aliivibrio fischeri (strain ATCC 700601 / ES114) (Vibrio fischeri).